The following is a 70-amino-acid chain: Kunitz-type serine protease inhibitor BmKTT-3 (70 aa).

In terms of domain architecture, BPTI/Kunitz inhibitor spans 7-57 (CRLPPERGPCRGNITKYYYHNESRTCRTFSYGGCEGNSNNFRNRHYCMKYC). 3 cysteine pairs are disulfide-bonded: cysteine 7–cysteine 57, cysteine 16–cysteine 40, and cysteine 32–cysteine 53.

Belongs to the venom Kunitz-type family. Scorpion delta-Ktx subfamily. Delta-Ktx 1 sub-subfamily. Expressed by the venom gland.

It localises to the secreted. Functionally, serine protease inhibitor that inhibits 85% of the activity of trypsin at a molar ratio of 4:1 (Ki=760 nM). The polypeptide is Kunitz-type serine protease inhibitor BmKTT-3 (Olivierus martensii (Manchurian scorpion)).